The chain runs to 813 residues: Cadherin-22 (813 aa).

The signal sequence occupies residues 1–33; the sequence is MRPRPEGALRAGAALSPVLLFLLLLPLLGHLWA. The Extracellular portion of the chain corresponds to 34–621; that stretch reads ASTPAPSSLS…AFVMAASLSP (588 aa). Cadherin domains follow at residues 61-165, 166-274, 275-391, 392-495, and 496-613; these read WVWN…EPRF, LHGP…PPRF, PQKM…PPEF, RPPS…NPPE, and LATP…TTAF. A glycan (N-linked (GlcNAc...) asparagine) is linked at Asn-159. Residues Asn-463 and Asn-609 are each glycosylated (N-linked (GlcNAc...) asparagine). Residues 622–642 traverse the membrane as a helical segment; it reads GALIALLVCVLILVVLALLIL. Residues 643–813 lie on the Cytoplasmic side of the membrane; sequence TLRRHHKSHL…HRGDDEAPAS (171 aa). Residues 696–726 form a disordered region; sequence GGDPGGGAASPPQAASSSERHSLPRGPSSPE.

As to expression, predominantly expressed in brain. Abundant in olfactory bulb, cerebrum, and cerebellum, less in pons, medulla, and spinal cord. Low expression in heart. No expression in lung, liver, spleen, kidney, testis, stomach, intestine, colon, and placenta.

The protein resides in the cell membrane. Functionally, cadherins are calcium-dependent cell adhesion proteins. They preferentially interact with themselves in a homophilic manner in connecting cells; cadherins may thus contribute to the sorting of heterogeneous cell types. PB-cadherins may have a role in the morphological organization of pituitary gland and brain tissues. The sequence is that of Cadherin-22 (Cdh22) from Mus musculus (Mouse).